The following is a 381-amino-acid chain: Beta-lactamase CMY-4 (381 aa).

The first 20 residues, 1–20, serve as a signal peptide directing secretion; it reads MMKKSLCCALLLTASFSTFA. The active-site Acyl-ester intermediate is the Ser84. Residues Ser84, Gln140, Tyr170, and Asn172 each coordinate a beta-lactam.

This sequence belongs to the class-C beta-lactamase family.

It catalyses the reaction a beta-lactam + H2O = a substituted beta-amino acid. Its function is as follows. Class C beta-lactamase which confers resistance to penicillins and cephalosporins. This Klebsiella pneumoniae protein is Beta-lactamase CMY-4.